Here is an 81-residue protein sequence, read N- to C-terminus: Penaeidin-3j (81 aa).

Residues 1-19 (MRLVVCLVFLASFALVCQG) form the signal peptide. The residue at position 20 (Q20) is a Pyrrolidone carboxylic acid. 3 cysteine pairs are disulfide-bonded: C50–C65, C54–C72, and C66–C73. S80 is subject to Serine amide.

This sequence belongs to the penaeidin family.

The protein resides in the cytoplasmic granule. Antibacterial and antifungal activity. Presents chitin-binding activity. This chain is Penaeidin-3j, found in Penaeus vannamei (Whiteleg shrimp).